A 181-amino-acid polypeptide reads, in one-letter code: MSANENNLIWIDLEMTGLDPERDRIIEIATLVTDANLNILAEGPTIAVHQSDEQLALMDGWNVRTHTASGLVERVKASTMGDREAELATLEFLKQWVPAGKSPICGNSIGQDRRFLFKYMPELEAYFHYRYLDVSTLKELARRWKPEILDGFTKQGTHQAMDDIRESVAELAYYREHFIKL.

One can recognise an Exonuclease domain in the interval 8-171; sequence LIWIDLEMTG…DDIRESVAEL (164 aa). Residue Tyr-129 is part of the active site.

This sequence belongs to the oligoribonuclease family. Homodimer.

It is found in the cytoplasm. 3'-to-5' exoribonuclease specific for small oligoribonucleotides. The protein is Oligoribonuclease of Escherichia coli O157:H7.